Consider the following 612-residue polypeptide: Beta-mannosyltransferase 5 (612 aa).

Residues 1 to 12 (MVQKQYRFAPKS) lie on the Cytoplasmic side of the membrane. The chain crosses the membrane as a helical span at residues 13-33 (IFTFVFLCFVAIVVIISTSSL). The Extracellular portion of the chain corresponds to 34–612 (VQVEESLDPI…YRAHLKRWQN (579 aa)). N-linked (GlcNAc...) asparagine glycosylation is found at asparagine 224, asparagine 230, and asparagine 480.

It belongs to the BMT family.

The protein localises to the membrane. Its function is as follows. Beta-mannosyltransferase involved in cell wall biosynthesis. Required for beta-1,2-mannose transfer on phospholipomannan. The sequence is that of Beta-mannosyltransferase 5 (BMT5) from Candida albicans (strain SC5314 / ATCC MYA-2876) (Yeast).